A 106-amino-acid chain; its full sequence is Large ribosomal subunit protein uL24 (106 aa).

Belongs to the universal ribosomal protein uL24 family. In terms of assembly, part of the 50S ribosomal subunit.

In terms of biological role, one of two assembly initiator proteins, it binds directly to the 5'-end of the 23S rRNA, where it nucleates assembly of the 50S subunit. Functionally, one of the proteins that surrounds the polypeptide exit tunnel on the outside of the subunit. This is Large ribosomal subunit protein uL24 from Parabacteroides distasonis (strain ATCC 8503 / DSM 20701 / CIP 104284 / JCM 5825 / NCTC 11152).